We begin with the raw amino-acid sequence, 95 residues long: MASGQQQQGRSELDRMAREGQTVVPGGTGGKSLEAQENLAEGRSRGGQTRKEQMGEEGYREMGRKGGLSTGDESGGERAAREGIDIDESKYKTKS.

The span at 1–10 (MASGQQQQGR) shows a compositional bias: polar residues. A disordered region spans residues 1–95 (MASGQQQQGR…IDESKYKTKS (95 aa)). 2 stretches are compositionally biased toward basic and acidic residues: residues 40–64 (AEGR…EMGR) and 75–95 (GGER…KTKS).

The protein belongs to the small hydrophilic plant seed protein family. As to expression, expressed in dry seeds and immature embryos.

In terms of biological role, em protein may act as a cytoplasm protectant during desiccation. The polypeptide is Embryonic abundant protein 1 (EMP1) (Oryza sativa subsp. japonica (Rice)).